The sequence spans 228 residues: Cytidylate kinase (228 aa).

17-25 serves as a coordination point for ATP; sequence GPTASGKGT.

The protein belongs to the cytidylate kinase family. Type 1 subfamily.

The protein localises to the cytoplasm. It carries out the reaction CMP + ATP = CDP + ADP. The catalysed reaction is dCMP + ATP = dCDP + ADP. The polypeptide is Cytidylate kinase (Burkholderia ambifaria (strain ATCC BAA-244 / DSM 16087 / CCUG 44356 / LMG 19182 / AMMD) (Burkholderia cepacia (strain AMMD))).